Reading from the N-terminus, the 659-residue chain is Checkpoint protein RAD24 (659 aa).

The tract at residues Thr24 to Ile54 is disordered. Gly109 to Ser116 provides a ligand contact to ATP. The span at Glu596–Ser612 shows a compositional bias: acidic residues. The segment at Glu596–Leu659 is disordered. Ser652 and Ser654 each carry phosphoserine.

This sequence belongs to the rad17/RAD24 family. In terms of assembly, component of the RAD24-RFC complex which consists of RAD14, RFC2, RFC3, RFC4 and RFC5 and associates with the checkpoint clamp DDC1:MEC3:RAD17 complex. RAD24 interacts with ECO1.

It is found in the nucleus. Its function is as follows. Participates in checkpoint pathways arrest of the cell cycle, a mechanism that allows the DNA repair pathways to act to restore the integrity of the DNA prior to DNA synthesis or separation of the replicated chromosomes. Regulates the DNA damage checkpoint pathway throughout the cell cycle, when associated with RCF5. Component of the RFC-like RAD24-RFC complex which loads the checkpoint clamp DDC1:MEC3:RAD17 complex and is involved in DNA repair pathways. During a clamp loading circle, the RFC:clamp complex binds to DNA and the recognition of the double-stranded/single-stranded junction stimulates ATP hydrolysis by RFC. The complex presumably provides bipartite ATP sites in which one subunit supplies a catalytic site for hydrolysis of ATP bound to the neighboring subunit. Dissociation of RFC from the clamp leaves the clamp encircling DNA. This is Checkpoint protein RAD24 (RAD24) from Saccharomyces cerevisiae (strain ATCC 204508 / S288c) (Baker's yeast).